The primary structure comprises 565 residues: Membrane protein insertase YidC (565 aa).

The next 6 helical transmembrane spans lie at 6–26, 348–368, 370–390, 437–457, 479–499, and 516–536; these read VLLIFSWLTVATLLWMDWGKN, LMALIGQGLFWILSHLNSLLH, WGWAIVGLVVLLRIAMYPLSA, GGCFPILIQMPIFFALYWVLV, PYFILPLLNIVIMWATQKLTP, and PLIFGVMMAFVPSGLALYWVI.

This sequence belongs to the OXA1/ALB3/YidC family. Type 1 subfamily. As to quaternary structure, interacts with the Sec translocase complex via SecD. Specifically interacts with transmembrane segments of nascent integral membrane proteins during membrane integration.

It localises to the cell inner membrane. In terms of biological role, required for the insertion and/or proper folding and/or complex formation of integral membrane proteins into the membrane. Involved in integration of membrane proteins that insert both dependently and independently of the Sec translocase complex, as well as at least some lipoproteins. Aids folding of multispanning membrane proteins. The chain is Membrane protein insertase YidC from Xylella fastidiosa (strain 9a5c).